The chain runs to 855 residues: Axonemal dynein light chain domain-containing protein 1 (855 aa).

The segment covering methionine 1 to serine 17 has biased composition (polar residues). The segment at methionine 1–arginine 31 is disordered. Coiled-coil stretches lie at residues glutamine 316–alanine 402, leucine 451–leucine 480, and serine 571–glycine 596.

The protein resides in the cytoplasm. May be essential for spermiogenesis and male fertility probably by regulating the manchette dynamics, spermatid head shaping and sperm flagellum assembly. In Macaca fascicularis (Crab-eating macaque), this protein is Axonemal dynein light chain domain-containing protein 1 (AXDND1).